A 98-amino-acid chain; its full sequence is Prostate and testis expressed protein 3 (98 aa).

The signal sequence occupies residues 1–20 (MNKHFLFLFLLYCLIVAVTS). The UPAR/Ly6 domain occupies 21–97 (LQCITCHLRT…CCNYNYCNFK (77 aa)). 4 cysteine pairs are disulfide-bonded: cysteine 23–cysteine 50, cysteine 26–cysteine 35, cysteine 42–cysteine 68, and cysteine 72–cysteine 88.

The protein belongs to the PATE family. In terms of tissue distribution, specifically expressed in prostate and testis.

It is found in the secreted. This Homo sapiens (Human) protein is Prostate and testis expressed protein 3 (PATE3).